Reading from the N-terminus, the 588-residue chain is Pescadillo homolog (588 aa).

A required for 28S ribosomal RNA processing region spans residues 1–54 (MGGLEKKKYERGSATNYITRNKARKKLQLSLADFRRLCILKGIYPHEPKHKKKV). Residues 1–257 (MGGLEKKKYE…PKLEGQAQAE (257 aa)) are sufficient for nucleolar localization. Lysine 98 is subject to N6-acetyllysine. The interval 294-314 (EAEVDEFPTDGEMSAQEEDRR) is disordered. The interval 306-415 (MSAQEEDRRK…LLLPVAEYFS (110 aa)) is sufficient for interaction with MAP1B. Positions 322 to 415 (KHKKLFEGLK…LLLPVAEYFS (94 aa)) constitute a BRCT domain. Residues 448-515 (GEDPGNLNES…GKKPRVMAGT (68 aa)) form a disordered region. Acidic residues predominate over residues 456–486 (ESEEEEEEDDNNEGDGDEEGENEEEEEDAEA). The segment covering 487-508 (GSEKEEEARLAALEEQRMEGKK) has biased composition (basic and acidic residues). A Glycyl lysine isopeptide (Lys-Gly) (interchain with G-Cter in SUMO1); alternate cross-link involves residue lysine 517. A Glycyl lysine isopeptide (Lys-Gly) (interchain with G-Cter in SUMO2); alternate cross-link involves residue lysine 517. A required for 28S ribosomal RNA processing region spans residues 539–588 (MMKKREKYLYQKIMFGKRRKIREANKLAEKRKAHDEAVRSEKKAKKARPE). The tract at residues 565-588 (LAEKRKAHDEAVRSEKKAKKARPE) is disordered.

The protein belongs to the pescadillo family. In terms of assembly, component of the PeBoW complex, composed of BOP1, PES1 and WDR12. The complex is held together by BOP1, which interacts with PES1 via its N-terminal domain and with WDR12 via a high-affinity interaction between the seven-bladed beta-propeller domains of the 2 proteins. The PeBoW complex associates with the 66S pre-ribosome. The PeBoW complex also associates with DDX27, PES1 interacts directly with DDX27. Interacts with IRS1 and UBTF. May interact with MAP1B. In terms of processing, sumoylated. In terms of tissue distribution, significant levels are detected in a variety of cancer cell lines, including glioblastoma, breast carcinoma, colon carcinoma and cervical carcinoma cells. Levels are abnormally elevated in malignant tumors of astrocytic origin.

The protein localises to the nucleus. It localises to the nucleolus. The protein resides in the nucleoplasm. It is found in the chromosome. Its function is as follows. Component of the PeBoW complex, which is required for maturation of 28S and 5.8S ribosomal RNAs and formation of the 60S ribosome. In Homo sapiens (Human), this protein is Pescadillo homolog.